The primary structure comprises 209 residues: Thymidine kinase (209 aa).

Residues 16–23 and 90–93 contribute to the ATP site; these read GPMFAGKT and DESQ. The Proton acceptor role is filled by E91.

Belongs to the thymidine kinase family. Homotetramer.

The protein resides in the cytoplasm. It carries out the reaction thymidine + ATP = dTMP + ADP + H(+). This chain is Thymidine kinase, found in Aster yellows witches'-broom phytoplasma (strain AYWB).